Here is a 311-residue protein sequence, read N- to C-terminus: Ribonuclease Z (311 aa).

Positions 61, 63, 65, 66, 137, 207, and 263 each coordinate Zn(2+). Asp65 acts as the Proton acceptor in catalysis.

This sequence belongs to the RNase Z family. Homodimer. Requires Zn(2+) as cofactor.

The enzyme catalyses Endonucleolytic cleavage of RNA, removing extra 3' nucleotides from tRNA precursor, generating 3' termini of tRNAs. A 3'-hydroxy group is left at the tRNA terminus and a 5'-phosphoryl group is left at the trailer molecule.. Zinc phosphodiesterase, which displays some tRNA 3'-processing endonuclease activity. Probably involved in tRNA maturation, by removing a 3'-trailer from precursor tRNA. The polypeptide is Ribonuclease Z (Thermococcus onnurineus (strain NA1)).